The primary structure comprises 156 residues: Phosphopantetheine adenylyltransferase (156 aa).

A substrate-binding site is contributed by Ser-9. ATP-binding positions include 9–10 (SF) and His-17. Positions 41, 74, and 88 each coordinate substrate. ATP contacts are provided by residues 89 to 91 (GLR), Glu-99, and 123 to 129 (LLHVSSS).

It belongs to the bacterial CoaD family. Homohexamer. Requires Mg(2+) as cofactor.

The protein localises to the cytoplasm. The catalysed reaction is (R)-4'-phosphopantetheine + ATP + H(+) = 3'-dephospho-CoA + diphosphate. The protein operates within cofactor biosynthesis; coenzyme A biosynthesis; CoA from (R)-pantothenate: step 4/5. Functionally, reversibly transfers an adenylyl group from ATP to 4'-phosphopantetheine, yielding dephospho-CoA (dPCoA) and pyrophosphate. This chain is Phosphopantetheine adenylyltransferase, found in Kocuria rhizophila (strain ATCC 9341 / DSM 348 / NBRC 103217 / DC2201).